A 67-amino-acid polypeptide reads, in one-letter code: Conotoxin Cal14.2c (67 aa).

Residues 1–20 (MNVTVMFLVLLLLTMPLTDG) form the signal peptide. Positions 21–48 (FNIRATNGGELFGPVQRDAGNVLDHGFQ) are excised as a propeptide.

This sequence belongs to the conotoxin L superfamily. In terms of processing, contains 2 disulfide bonds. As to expression, expressed by the venom duct.

It localises to the secreted. Probable neurotoxin with unknown target. Possibly targets ion channels. This Californiconus californicus (California cone) protein is Conotoxin Cal14.2c.